A 247-amino-acid polypeptide reads, in one-letter code: Carboxy-S-adenosyl-L-methionine synthase (247 aa).

S-adenosyl-L-methionine contacts are provided by residues tyrosine 40, 65-67, 90-91, 122-123, asparagine 137, and arginine 204; these read GSS, DN, and DI.

This sequence belongs to the class I-like SAM-binding methyltransferase superfamily. Cx-SAM synthase family. As to quaternary structure, homodimer.

The enzyme catalyses prephenate + S-adenosyl-L-methionine = carboxy-S-adenosyl-L-methionine + 3-phenylpyruvate + H2O. In terms of biological role, catalyzes the conversion of S-adenosyl-L-methionine (SAM) to carboxy-S-adenosyl-L-methionine (Cx-SAM). This Pseudomonas fluorescens (strain SBW25) protein is Carboxy-S-adenosyl-L-methionine synthase.